A 130-amino-acid chain; its full sequence is Nascent polypeptide-associated complex protein (130 aa).

The NAC-A/B domain maps to 6–74 (GMNPRKMQQM…PVERDAADAI (69 aa)). The interval 65 to 91 (PVERDAADAIEAAPADDSDDTDDDDAI) is disordered. Residues 78–90 (PADDSDDTDDDDA) show a composition bias toward acidic residues.

The protein belongs to the NAC-alpha family. As to quaternary structure, homodimer. Interacts with the ribosome. Binds ribosomal RNA.

Contacts the emerging nascent chain on the ribosome. The protein is Nascent polypeptide-associated complex protein of Halobacterium salinarum (strain ATCC 700922 / JCM 11081 / NRC-1) (Halobacterium halobium).